The primary structure comprises 899 residues: Alanine--tRNA ligase, chloroplastic/mitochondrial (899 aa).

His-581, His-585, Cys-683, and His-687 together coordinate Zn(2+).

This sequence belongs to the class-II aminoacyl-tRNA synthetase family. In terms of assembly, monomer. The cofactor is Zn(2+).

The protein localises to the plastid. It localises to the chloroplast. It is found in the mitochondrion. It carries out the reaction tRNA(Ala) + L-alanine + ATP = L-alanyl-tRNA(Ala) + AMP + diphosphate. Functionally, catalyzes the attachment of alanine to tRNA(Ala) in a two-step reaction: alanine is first activated by ATP to form Ala-AMP and then transferred to the acceptor end of tRNA(Ala). Also edits incorrectly charged tRNA(Ala) via its editing domain. This chain is Alanine--tRNA ligase, chloroplastic/mitochondrial, found in Micromonas pusilla (strain CCMP1545) (Picoplanktonic green alga).